Reading from the N-terminus, the 461-residue chain is MLSVGATTTATRLTGWGRTAPSVANVLRTPDAEMIVKAVARVAESGGGRGAIARGLGRSYGDNAQNGGGLVIDMTPLNTIHSIDADTKLVDIDAGVNLDQLMKAALPFGLWVPVLPGTRQVTVGGAIACDIHGKNHHSAGSFGNHVRSMDLLTADGEIRHLTPTGEDAELFWATVGGNGLTGIIMRATIEMTPTSTAYFIADGDVTASLDETIALHSDGSEARYTYSSAWFDAISAPPKLGRAAVSRGRLATVEQLPAKLRSEPLKFDAPQLLTLPDVFPNGLANKYTFGPIGELWYRKSGTYRGKVQNLTQFYHPLDMFGEWNRAYGPAGFLQYQFVIPTEAVDEFKKIIGVIQASGHYSFLNVFKLFGPRNQAPLSFPIPGWNICVDFPIKDGLGKFVSELDRRVLEFGGRLYTAKDSRTTAETFHAMYPRVDEWISVRRKVDPLRVFASDMARRLELL.

Residues 19–194 (TAPSVANVLR…MRATIEMTPT (176 aa)) enclose the FAD-binding PCMH-type domain. Residues 53-63 (ARGLGRSYGDN), Gly-117, 122-125 (TVGG), 129-132 (CDIH), Ile-184, and Tyr-415 each bind FAD.

The protein belongs to the DprE1 family. In terms of assembly, monomer. Although forming apparent dimer in crystals, DprE1 does not dimerize appreciably in solution. Interacts with DprE2 to form an epimerase complex.

The protein localises to the periplasm. It carries out the reaction trans,octa-cis-decaprenylphospho-beta-D-ribofuranose + FAD + H(+) = trans,octa-cis-decaprenylphospho-beta-D-erythro-pentofuranosid-2-ulose + FADH2. It functions in the pathway cell wall biogenesis; cell wall polysaccharide biosynthesis. Its activity is regulated as follows. Is inhibited by 8-nitro-benzothiazinones (BTZs) such as BTZ043 and PBTZ169; BTZs are a new class of antimycobacterial agents that kill M.tuberculosis in vitro, ex vivo, and in mouse models of tuberculosis. Is also inhibited by dinitrobenzamide derivatives (DNBs), which thus block formation of both cell-wall lipoarabinomannan and arabinogalactan via inhibition of decaprenyl-phospho-arabinose (DPA) synthesis; DNBs show high activity against intracellular growth of M.tuberculosis inside macrophages, including extensively drug resistant (XDR) strains. BTZs and DNBs are suicide inhibitors that act via covalent modification of DprE1; the essential nitro group of these compounds is reduced by DprE1 to a nitroso group, which then specifically reacts with Cys-387 of DprE1 to form an irreversible semimercaptal adduct. Many other compounds with diverse scaffolds were found to act as either covalent (e.g. nitroquinoxalines, nitroimidazoles) or non-covalent (e.g. the benzothiazole derivative TCA1, the 2-carboxyquinoxaline Ty38C, 8-pyrrole-benzothiazinones, 1,4-azaindoles, pyrazolopyridones, 4-aminoquinolone piperidine amides) DprE1 inhibitors. Component of the DprE1-DprE2 complex that catalyzes the 2-step epimerization of decaprenyl-phospho-ribose (DPR) to decaprenyl-phospho-arabinose (DPA), a key precursor that serves as the arabinose donor required for the synthesis of cell-wall arabinans. DprE1 catalyzes the first step of epimerization, namely FAD-dependent oxidation of the C2' hydroxyl of DPR to yield the keto intermediate decaprenyl-phospho-2'-keto-D-arabinose (DPX). The intermediate DPX is then transferred to DprE2 subunit of the epimerase complex, most probably through a 'substrate channel' at the interface of DprE1-DprE2 complex. Can also use farnesyl-phosphoryl-beta-D-ribofuranose (FPR) as substrate in vitro. In terms of biological role, dprE1 is a highly vulnerable and fully validated tuberculosis drug target. This is Decaprenylphosphoryl-beta-D-ribose oxidase from Mycobacterium tuberculosis (strain CDC 1551 / Oshkosh).